A 179-amino-acid chain; its full sequence is Endoribonuclease YbeY (179 aa).

3 residues coordinate Zn(2+): histidine 148, histidine 152, and histidine 158.

This sequence belongs to the endoribonuclease YbeY family. The cofactor is Zn(2+).

It localises to the cytoplasm. In terms of biological role, single strand-specific metallo-endoribonuclease involved in late-stage 70S ribosome quality control and in maturation of the 3' terminus of the 16S rRNA. The protein is Endoribonuclease YbeY of Prochlorococcus marinus (strain MIT 9312).